A 546-amino-acid polypeptide reads, in one-letter code: Smad protein daf-8 (546 aa).

One can recognise an MH1 domain in the interval 16–137; the sequence is AMAQKVLEET…YRWVELPTCQ (122 aa). Disordered stretches follow at residues 234-268 and 292-317; these read LQQS…FIPN and ENFS…PIEP. The span at 292-302 shows a compositional bias: polar residues; sequence ENFSSENNGNR. One can recognise an MH2 domain in the interval 349–546; sequence WLKLIYYEEG…APPRICSSRT (198 aa).

The protein belongs to the dwarfin/SMAD family. As to quaternary structure, homodimer. Interacts with R-SMAD daf-14 and co-SMAD daf-3. Interacts with orphan nuclear receptor nhr-69. In terms of tissue distribution, expressed in the excretory cell and gonadal distal tip cells (DTCs).

It localises to the cytoplasm. Its subcellular location is the nucleus. Its function is as follows. Probably a receptor-regulated SMAD (R-SMAD) that is an intracellular signal transducer and transcriptional modulator activated by TGF-beta-like daf-7 signaling. Plays a role in TGF-beta-like daf-7 signaling in regulating entry into a developmentally arrested larval state known as dauer, in response to harsh environmental conditions; partially redundant with R-SMAD daf-14. Plays a role in inhibiting mitosis and promoting a switch to meiosis in the germ line, perhaps by down-regulating lag-2 transcription in the gonadal distal tip cells (DTCs). In cooperation with orphan nuclear receptor nhr-69 modulates the Insulin/IGF-1-like signaling (IIS) pathway, perhaps by regulating expression of the potassium channel exp-2, which in turn modulates the secretion of the insulin-like peptide daf-28. The polypeptide is Smad protein daf-8 (Caenorhabditis elegans).